A 275-amino-acid chain; its full sequence is Autophagy protein 5 (275 aa).

Methionine 1 carries the N-acetylmethionine modification. Residue lysine 130 forms a Glycyl lysine isopeptide (Lys-Gly) (interchain with G-Cter in ATG12) linkage.

This sequence belongs to the ATG5 family. Forms a conjugate with ATG12. Part of the minor complex composed of 4 sets of ATG12-ATG5 and ATG16L1 (400 kDa); this complex interacts with ATG3 leading to disruption of ATG7 interaction and promotion of ATG8-like proteins lipidation. Forms an 800-kDa complex composed of ATG12-ATG5 and ATG16L2. The ATG12-ATG5 conjugate interacts with RAB33A; this interaction is bridged by ATG16L1 and promotes ATG12-ATG5-ATG16L1 complex recruitment to phagophores. Interacts with TECPR1; the interaction is direct and does not take place when ATG16L1 is associated with the ATG5-ATG12 conjugate. Interacts with DHX58/RIG-1, IFIH1/MDA5 and MAVS/IPS-1 in monomeric form as well as in ATG12-ATG5 conjugate form. The interaction with MAVS is further enhanced upon vesicular stomatitis virus (VSV) infection. Interacts with ATG3. Interacts with ATG7 and ATG10. Interacts with FADD. Interacts with Bassoon/BSN; this interaction is important for the regulation of presynaptic autophagy. Interacts with ATG16L2. Post-translationally, conjugated to ATG12; which is essential for autophagy, but is not required for association with isolation membrane. Acetylated by EP300. Ubiquitous.

The protein resides in the cytoplasm. It is found in the preautophagosomal structure membrane. Involved in autophagic vesicle formation. Conjugation with ATG12, through a ubiquitin-like conjugating system involving ATG7 as an E1-like activating enzyme and ATG10 as an E2-like conjugating enzyme, is essential for its function. The ATG12-ATG5 conjugate acts as an E3-like enzyme which is required for lipidation of ATG8 family proteins and their association to the vesicle membranes. Involved in mitochondrial quality control after oxidative damage, and in subsequent cellular longevity. Plays a critical role in multiple aspects of lymphocyte development and is essential for both B and T lymphocyte survival and proliferation. Required for optimal processing and presentation of antigens for MHC II. Involved in the maintenance of axon morphology and membrane structures, as well as in normal adipocyte differentiation. Promotes primary ciliogenesis through removal of OFD1 from centriolar satellites and degradation of IFT20 via the autophagic pathway. As part of the ATG8 conjugation system with ATG12 and ATG16L1, required for recruitment of LRRK2 to stressed lysosomes and induction of LRRK2 kinase activity in response to lysosomal stress. Its function is as follows. May play an important role in the apoptotic process, possibly within the modified cytoskeleton. Its expression is a relatively late event in the apoptotic process, occurring downstream of caspase activity. Plays a crucial role in IFN-gamma-induced autophagic cell death by interacting with FADD. In terms of biological role, (Microbial infection) May act as a proviral factor. In association with ATG12, negatively regulates the innate antiviral immune response by impairing the type I IFN production pathway upon vesicular stomatitis virus (VSV) infection. The chain is Autophagy protein 5 from Mus musculus (Mouse).